We begin with the raw amino-acid sequence, 599 residues long: NADH-quinone oxidoreductase subunit C/D (599 aa).

Positions 1 to 189 (MTDLTTHDLA…DPFVLTKQKE (189 aa)) are NADH dehydrogenase I subunit C. Positions 213–599 (DFMFLNLGPN…IDFVMSDVDR (387 aa)) are NADH dehydrogenase I subunit D.

It in the N-terminal section; belongs to the complex I 30 kDa subunit family. The protein in the C-terminal section; belongs to the complex I 49 kDa subunit family. As to quaternary structure, NDH-1 is composed of 13 different subunits. Subunits NuoB, CD, E, F, and G constitute the peripheral sector of the complex.

It is found in the cell inner membrane. It catalyses the reaction a quinone + NADH + 5 H(+)(in) = a quinol + NAD(+) + 4 H(+)(out). Functionally, NDH-1 shuttles electrons from NADH, via FMN and iron-sulfur (Fe-S) centers, to quinones in the respiratory chain. The immediate electron acceptor for the enzyme in this species is believed to be ubiquinone. Couples the redox reaction to proton translocation (for every two electrons transferred, four hydrogen ions are translocated across the cytoplasmic membrane), and thus conserves the redox energy in a proton gradient. The polypeptide is NADH-quinone oxidoreductase subunit C/D (Pectobacterium carotovorum subsp. carotovorum (strain PC1)).